The chain runs to 788 residues: Protein HHLF1 (788 aa).

Disordered stretches follow at residues 1–82 (MAQR…NFWH), 366–385 (TGTAAGTTSPPAASGTETEA), and 609–663 (IHKK…SRLP). The span at 16 to 25 (RGRGAGGPSG) shows a compositional bias: gly residues. The span at 26-56 (VGSSPPSSCVPMGAPSTAGTGASAAATTTPG) shows a compositional bias: low complexity. The interval 74–248 (SGNNSNFWHG…HGAGEVVRLY (175 aa)) is RNA-binding. Basic and acidic residues predominate over residues 650–659 (LRRDDEDWKP). The tract at residues 671–788 (LDETFWVLGS…IATHYHYNAQ (118 aa)) is interaction with host EIF2AK2/PKR.

It belongs to the herpesviridae US22 family. As to quaternary structure, interacts with host EIF2AK2/PKR; this interaction retains EIF2AK2 to the host nucleus and prevents its activation. Interaction (via N-terminus) with host BECN1; this interaction inhibits host autophagy. Interacts with the viral DNA polymerase accessory subunit UL44. Interacts with host HSPA5.

The protein resides in the virion. The protein localises to the host cytoplasm. Its subcellular location is the host nucleus. Functionally, inhibits the establishment of the antiviral state and the integrated stress response (ISR) in the infected cell. Prevents the phosphorylation of the host eukaryotic translation initiation factor eIF-2alpha/EIF2S1 and thus the shutoff of viral and cellular protein synthesis by directly interacting with EIF2AK2/PKR. Prevents stress granule formation in response to eIF-2alpha/EIF2S1 phosphorylation, thereby rescuing viral replication and protein synthesis. Also inhibits host autophagy by interacting with host Beclin-1/BECN1. This Homo sapiens (Human) protein is Protein HHLF1 (TRS1).